The chain runs to 430 residues: Flavin-dependent monooxygenase eupH (430 aa).

FAD-binding positions include 11–14, 33–34, Gln-43, Arg-107, Tyr-282, and Asp-306; these read AGIG and ER.

This sequence belongs to the aromatic-ring hydroxylase family. Requires FAD as cofactor.

Its pathway is secondary metabolite biosynthesis; terpenoid biosynthesis. Its function is as follows. Flavin-dependent monooxygenase; part of the gene cluster that mediates the biosynthesis of eupenifeldin, a bistropolone meroterpenoid that acts as an antitumor agent. The first step of eupenifeldin biosynthesis is the biosynthesis of 3-methylorcinaldehyde performed by the non-reducing polyketide synthase eupA. Oxidative dearomatization of 3-methylorcinaldehyde likely catalyzed by the FAD-dependent monooxygenase eupB is followed by oxidative ring expansion by the 2-oxoglutarate-dependent dioxygenase eupC to provide the first tropolone metabolite, tropolone stipitaldehyde. In parallel, generation of sesquiterpene alpha-humulene from farnesylpyrophosphate (FPP) is catalyzed by the terpene cyclase eupE. The cytochrome P450 monooxygenase eupD then hydroxylates humulene to humulenol. The putative Diels-Alderase eupF probably catalyzes the formation of the tropolone-humulene skeleton by linking humulenol and the polyketide moiety. The short-chain dehydrogenase/reductase eupG and the flavin-dependent monooxygenase eupH are also essential for eupenifeldin biosynthesis and are likely the additional decorating enzymes of the tropolone-humulene skeleton to produce final eupenifeldin or derivatives. In Phoma sp, this protein is Flavin-dependent monooxygenase eupH.